The following is a 267-amino-acid chain: Shikimate dehydrogenase (NADP(+)) (267 aa).

Shikimate contacts are provided by residues 14–16 (SLS) and threonine 61. Lysine 65 serves as the catalytic Proton acceptor. Residues asparagine 86 and aspartate 101 each coordinate shikimate. Residues 126 to 130 (GAGGA), 150 to 155 (NRTHSK), and leucine 213 contribute to the NADP(+) site. Tyrosine 215 is a binding site for shikimate. Position 236 (glycine 236) interacts with NADP(+).

This sequence belongs to the shikimate dehydrogenase family. In terms of assembly, homodimer.

It catalyses the reaction shikimate + NADP(+) = 3-dehydroshikimate + NADPH + H(+). The protein operates within metabolic intermediate biosynthesis; chorismate biosynthesis; chorismate from D-erythrose 4-phosphate and phosphoenolpyruvate: step 4/7. In terms of biological role, involved in the biosynthesis of the chorismate, which leads to the biosynthesis of aromatic amino acids. Catalyzes the reversible NADPH linked reduction of 3-dehydroshikimate (DHSA) to yield shikimate (SA). This chain is Shikimate dehydrogenase (NADP(+)), found in Vesicomyosocius okutanii subsp. Calyptogena okutanii (strain HA).